The chain runs to 213 residues: Kynurenine formamidase (213 aa).

Trp18 lines the substrate pocket. Residues His48, His52, and Asp54 each coordinate Zn(2+). His58 acts as the Proton donor/acceptor in catalysis. 2 residues coordinate Zn(2+): His160 and Glu172.

This sequence belongs to the Cyclase 1 superfamily. KynB family. Homodimer. It depends on Zn(2+) as a cofactor.

It catalyses the reaction N-formyl-L-kynurenine + H2O = L-kynurenine + formate + H(+). It participates in amino-acid degradation; L-tryptophan degradation via kynurenine pathway; L-kynurenine from L-tryptophan: step 2/2. Functionally, catalyzes the hydrolysis of N-formyl-L-kynurenine to L-kynurenine, the second step in the kynurenine pathway of tryptophan degradation. This is Kynurenine formamidase from Burkholderia cenocepacia (strain HI2424).